We begin with the raw amino-acid sequence, 198 residues long: Peroxiredoxin-2 (198 aa).

A2 is modified (N-acetylalanine). The Thioredoxin domain occupies 6–164; the sequence is ARIGKPAPDF…ALRLVQAFQY (159 aa). The active-site Cysteine sulfenic acid (-SOH) intermediate is the C51. S112 bears the Phosphoserine mark. Phosphothreonine is present on T182. K196 carries the post-translational modification N6-acetyllysine.

This sequence belongs to the peroxiredoxin family. AhpC/Prx1 subfamily. As to quaternary structure, homodimer; disulfide-linked, upon oxidation. 5 homodimers assemble to form a ring-like decamer. Interacts with TIPIN. The enzyme can be inactivated by further oxidation of the cysteine sulfenic acid (C(P)-SOH) to sulphinic acid (C(P)-SO2H) instead of its condensation to a disulfide bond. It can be reactivated by forming a transient disulfide bond with sulfiredoxin SRXN1, which reduces the cysteine sulfinic acid in an ATP- and Mg-dependent manner. Post-translationally, acetylation increases resistance to transition to high molecular-mass complexes. Deacetylated by HDAC6 which decreases reducing activity.

It is found in the cytoplasm. The enzyme catalyses a hydroperoxide + [thioredoxin]-dithiol = an alcohol + [thioredoxin]-disulfide + H2O. Its function is as follows. Thiol-specific peroxidase that catalyzes the reduction of hydrogen peroxide and organic hydroperoxides to water and alcohols, respectively. Plays a role in cell protection against oxidative stress by detoxifying peroxides and as sensor of hydrogen peroxide-mediated signaling events. Might participate in the signaling cascades of growth factors and tumor necrosis factor-alpha by regulating the intracellular concentrations of H(2)O(2). In Macaca fascicularis (Crab-eating macaque), this protein is Peroxiredoxin-2 (PRDX2).